The primary structure comprises 436 residues: MSDRQQVTNAKGDRIAIVTGLRTPFAKQATAFHGVSALDMGKMVVNELLSRSELDPKEIQQLVYGQVVQMPAAPNIAREIVLGTGMDIATDAYSVTRACATSFQSTVNVAESIMTGNIDIGIAGGSDSSSVLPIGVSKKLAHGLVDLNKARSFGQKLAIFRRLGLKDLLPVPPAVAEYSTGLSMGQTAEQMAKTYNISRADQDALAHRSHSLATETWNSGNLAQEVMTAHVPPYKAFIDRDNNIRENSSIESYAKLRPAFDRKHGTVTAATSTPLTDGASAILLMSESRAKALGYNPIGYIKSYAFSAIDVWEDMLMGPSYATPIALKRAGMELEDLTLIEMHEAFAAQALANMKMFASKKFAQEKLGRNRAIGEIDMNKFNVLGGSLAYGHPFAATGARLITQVCNELKRRGGGTGLTTACAAGGLGAAMIVEVE.

The Acyl-thioester intermediate role is filled by cysteine 99. Residues histidine 392 and cysteine 422 each act as proton acceptor in the active site.

This sequence belongs to the thiolase-like superfamily. Thiolase family. As to quaternary structure, heterotetramer of two alpha chains (FadJ) and two beta chains (FadI).

The protein resides in the cytoplasm. The catalysed reaction is an acyl-CoA + acetyl-CoA = a 3-oxoacyl-CoA + CoA. It functions in the pathway lipid metabolism; fatty acid beta-oxidation. Catalyzes the final step of fatty acid oxidation in which acetyl-CoA is released and the CoA ester of a fatty acid two carbons shorter is formed. In Shewanella woodyi (strain ATCC 51908 / MS32), this protein is 3-ketoacyl-CoA thiolase.